The chain runs to 472 residues: 3-isopropylmalate dehydratase large subunit (472 aa).

[4Fe-4S] cluster is bound by residues C347, C407, and C410.

The protein belongs to the aconitase/IPM isomerase family. LeuC type 1 subfamily. Heterodimer of LeuC and LeuD. It depends on [4Fe-4S] cluster as a cofactor.

It carries out the reaction (2R,3S)-3-isopropylmalate = (2S)-2-isopropylmalate. It participates in amino-acid biosynthesis; L-leucine biosynthesis; L-leucine from 3-methyl-2-oxobutanoate: step 2/4. In terms of biological role, catalyzes the isomerization between 2-isopropylmalate and 3-isopropylmalate, via the formation of 2-isopropylmaleate. This Bacillus velezensis (strain DSM 23117 / BGSC 10A6 / LMG 26770 / FZB42) (Bacillus amyloliquefaciens subsp. plantarum) protein is 3-isopropylmalate dehydratase large subunit.